Consider the following 1097-residue polypeptide: DNA-directed RNA polymerase subunit beta (1097 aa).

The segment at Gln1072 to Asp1097 is disordered. Residues Arg1077–Thr1091 show a composition bias toward polar residues.

This sequence belongs to the RNA polymerase beta chain family. In terms of assembly, in cyanobacteria the RNAP catalytic core is composed of 2 alpha, 1 beta, 1 beta', 1 gamma and 1 omega subunit. When a sigma factor is associated with the core the holoenzyme is formed, which can initiate transcription.

The catalysed reaction is RNA(n) + a ribonucleoside 5'-triphosphate = RNA(n+1) + diphosphate. Its function is as follows. DNA-dependent RNA polymerase catalyzes the transcription of DNA into RNA using the four ribonucleoside triphosphates as substrates. This Prochlorococcus marinus (strain AS9601) protein is DNA-directed RNA polymerase subunit beta.